Consider the following 454-residue polypeptide: C4-dicarboxylate transport protein (454 aa).

9 consecutive transmembrane segments (helical) span residues 33 to 53 (VQVLAAIAAGILLGHFYPDIG), 66 to 86 (LVKMIIAPVIFLTVATGIAGM), 101 to 121 (IYFLAFSTLALLVGLVVANLV), 148 to 168 (EQSITGFLMNIIPTTLVGAFA), 170 to 190 (GDILQVLFISVLFGISLAIVG), 210 to 230 (LVAILMKAAPIGAFGAMAFTI), 243 to 263 (MLIGTFYLTSFLFVFVVLGAV), 354 to 374 (LLLVAMLSSKGAAGITGAGFI), and 377 to 397 (AATLSVVPSVPVAGMALILGI).

It belongs to the dicarboxylate/amino acid:cation symporter (DAACS) (TC 2.A.23) family.

The protein localises to the cell inner membrane. Its function is as follows. Responsible for the transport of dicarboxylates such as succinate, fumarate, and malate from the periplasm across the membrane. The sequence is that of C4-dicarboxylate transport protein from Sinorhizobium medicae (strain WSM419) (Ensifer medicae).